Here is a 440-residue protein sequence, read N- to C-terminus: Endoplasmic reticulum junction formation protein lunapark (440 aa).

The Cytoplasmic portion of the chain corresponds to 1–45 (MGALLAKWRAKPSTVEVLEKMEKDIQSLEEFRDKNQKLRKIWVAR). The stretch at 16–40 (EVLEKMEKDIQSLEEFRDKNQKLRK) forms a coiled coil. Residues 46–66 (LFFYSTILYILTSLTVYLWYL) traverse the membrane as a helical segment. Residues 67–77 (PGGMTARLLTT) lie on the Lumenal side of the membrane. The helical transmembrane segment at 78-98 (LLFLLFPVLIWFVRTLLILWF) threads the bilayer. Residues 99–440 (SRRTERNNDA…ESEESFMETE (342 aa)) lie on the Cytoplasmic side of the membrane. A coiled-coil region spans residues 100–128 (RRTERNNDALELLKAEKKKILEEVMEKET). The tract at residues 149 to 169 (LELPVPGPPITPRPGQDLRQR) is disordered. Residue Thr-159 is modified to Phosphothreonine. 4 positions are modified to phosphoserine: Ser-177, Ser-179, Ser-188, and Ser-192. Phosphothreonine is present on Thr-198. The tract at residues 202–247 (QRDTSAPGGPPERSVQPTPQSNILQRRPGSPATAVSGMALHPPGPP) is disordered. Ser-206 and Ser-215 each carry phosphoserine. Polar residues predominate over residues 216 to 225 (VQPTPQSNIL). A Phosphothreonine modification is found at Thr-219. A phosphoserine mark is found at Ser-222 and Ser-231. The C4-type; plays a role in ER morphology zinc-finger motif lies at 280 to 305 (CQQCFSHNGMALKEEFEYVAFRCAYC). The segment at 316-440 (PQAPRLQEIS…ESEESFMETE (125 aa)) is disordered. A Phosphoserine modification is found at Ser-325. Residues 334 to 343 (DSQGSVNTLQ) are compositionally biased toward polar residues. Composition is skewed to acidic residues over residues 370–411 (QAIE…DDTE) and 431–440 (ESEESFMETE).

The protein belongs to the lunapark family. As to quaternary structure, homodimer; homodimerization requires the C4-type zinc finger motif and decreases during mitosis in a phosphorylation-dependent manner. Phosphorylated. Phosphorylation at Thr-159 and Ser-325 occurs during interphase. Phosphorylation at Ser-177, Ser-179, Ser-188, Ser-192, Thr-198, Ser-206, Ser-215, Thr-219, Ser-222 and Ser-231 occurs during mitosis; these phosphorylations reduce both its homodimerization and the ER three-way tubular junction formation.

It localises to the endoplasmic reticulum membrane. Its function is as follows. Endoplasmic reticulum (ER)-shaping membrane protein that plays a role in determining ER morphology. Involved in the stabilization of nascent three-way ER tubular junctions within the ER network. May also play a role as a curvature-stabilizing protein within three-way ER tubular junction network. This chain is Endoplasmic reticulum junction formation protein lunapark (lnpk), found in Xenopus laevis (African clawed frog).